The following is a 228-amino-acid chain: Octanoyltransferase (228 aa).

The BPL/LPL catalytic domain maps to 31–212 (EETDGILILL…KFEEVFEIKF (182 aa)). Substrate contacts are provided by residues 76 to 83 (RGGKITFH), 143 to 145 (AIG), and 156 to 158 (GIA). C174 functions as the Acyl-thioester intermediate in the catalytic mechanism.

It belongs to the LipB family.

Its subcellular location is the cytoplasm. It catalyses the reaction octanoyl-[ACP] + L-lysyl-[protein] = N(6)-octanoyl-L-lysyl-[protein] + holo-[ACP] + H(+). It functions in the pathway protein modification; protein lipoylation via endogenous pathway; protein N(6)-(lipoyl)lysine from octanoyl-[acyl-carrier-protein]: step 1/2. Its function is as follows. Catalyzes the transfer of endogenously produced octanoic acid from octanoyl-acyl-carrier-protein onto the lipoyl domains of lipoate-dependent enzymes. Lipoyl-ACP can also act as a substrate although octanoyl-ACP is likely to be the physiological substrate. The sequence is that of Octanoyltransferase from Caldanaerobacter subterraneus subsp. tengcongensis (strain DSM 15242 / JCM 11007 / NBRC 100824 / MB4) (Thermoanaerobacter tengcongensis).